Here is an 881-residue protein sequence, read N- to C-terminus: Fanconi anemia core complex-associated protein 100 (881 aa).

The disordered stretch occupies residues 94-119 (GRSRSTSQDDRDSEDGDQPSPVIPVD). The residue at position 667 (Ser667) is a Phosphoserine.

In terms of assembly, belongs to the multisubunit FA complex composed of FANCA, FANCB, FANCC, FANCE, FANCF, FANCG, FANCL/PHF9, FANCM, FAAP24 and FAAP100. Forms a subcomplex with FANCB and FANCL.

Its subcellular location is the nucleus. Plays a role in Fanconi anemia-associated DNA damage response network. Regulates FANCD2 monoubiquitination and the stability of the FA core complex. Induces chromosomal instability as well as hypersensitivity to DNA cross-linking agents, when repressed. This chain is Fanconi anemia core complex-associated protein 100, found in Homo sapiens (Human).